We begin with the raw amino-acid sequence, 420 residues long: Exodeoxyribonuclease 7 large subunit (420 aa).

This sequence belongs to the XseA family. In terms of assembly, heterooligomer composed of large and small subunits.

Its subcellular location is the cytoplasm. It carries out the reaction Exonucleolytic cleavage in either 5'- to 3'- or 3'- to 5'-direction to yield nucleoside 5'-phosphates.. Functionally, bidirectionally degrades single-stranded DNA into large acid-insoluble oligonucleotides, which are then degraded further into small acid-soluble oligonucleotides. The protein is Exodeoxyribonuclease 7 large subunit of Helicobacter pylori (strain Shi470).